The primary structure comprises 212 residues: Ribosomal RNA small subunit methyltransferase G (212 aa).

S-adenosyl-L-methionine contacts are provided by residues glycine 80, leucine 85, 131 to 132 (AE), and arginine 146.

It belongs to the methyltransferase superfamily. RNA methyltransferase RsmG family.

The protein resides in the cytoplasm. It carries out the reaction guanosine(527) in 16S rRNA + S-adenosyl-L-methionine = N(7)-methylguanosine(527) in 16S rRNA + S-adenosyl-L-homocysteine. In terms of biological role, specifically methylates the N7 position of guanine in position 527 of 16S rRNA. This is Ribosomal RNA small subunit methyltransferase G from Xanthomonas euvesicatoria pv. vesicatoria (strain 85-10) (Xanthomonas campestris pv. vesicatoria).